Here is a 549-residue protein sequence, read N- to C-terminus: Fumarate hydratase 1, mitochondrial (549 aa).

Residue C114 participates in [4Fe-4S] cluster binding. (S)-malate is bound by residues 115–116, R154, G197, and 200–206; these read QD and NKSFLLQ. [4Fe-4S] cluster contacts are provided by C233 and C328. Residues R404, 450 to 454, and K474 each bind (S)-malate; that span reads TTAGR.

It belongs to the class-I fumarase family. Homodimer. [4Fe-4S] cluster is required as a cofactor.

The protein localises to the mitochondrion. It carries out the reaction (S)-malate = fumarate + H2O. Its pathway is carbohydrate metabolism; tricarboxylic acid cycle; (S)-malate from fumarate: step 1/1. With respect to regulation, specifically and competitively inhibited by 2-thiomalate, which coordinates with the catalytic [4Fe-4S] cluster. In terms of biological role, catalyzes the reversible hydration of fumarate to (S)-malate. Catalyzes the hydration of fumarate to L-malate in the tricarboxylic acid (TCA) cycle to facilitate a transition step in the production of energy in the form of NADH. The protein is Fumarate hydratase 1, mitochondrial of Leishmania major.